The following is a 407-amino-acid chain: MSNETKKTGVKKVVLAYSGGLDTSAIIPWLKETYDNCEIIAFCADVGQGDAELEGLHEKAISSGASECYIVDLKEELVADYIYPTIATGAIYEGTYLLGTSMARPIIAKAQVEVARKVGADAVCHGCTGKGNDQVRFEGCFAALAPDLKVIAPWREWEMVSREDLLDYLAERNIETTSSVTKIYSRDANAWHISHEGGELEDPWNEPTKGVWTMTVAPEDAPNEPEYVSLELEQGKITKVNGASLSPYGALTVLNEIAGAHGVGRIDITENRLVGMKSRGCYETPGGTVMFAALRAIEELVLDKSSREWREQIGAQMAHLVYDGRWFTPLCESLLAASIPLANLVSGEVVIKLYKGQAHAVKKRSENSLYSEEFATFGEDDVYNQKDAEGFIRLYSLASRIRALKAK.

ATP contacts are provided by residues 16–24 (AYSGGLDTS) and alanine 44. L-citrulline is bound by residues tyrosine 96 and serine 101. Glycine 126 serves as a coordination point for ATP. Threonine 128, asparagine 132, and aspartate 133 together coordinate L-aspartate. Asparagine 132 serves as a coordination point for L-citrulline. L-citrulline contacts are provided by arginine 136, serine 185, serine 194, glutamate 270, and tyrosine 282.

It belongs to the argininosuccinate synthase family. Type 1 subfamily. In terms of assembly, homotetramer.

Its subcellular location is the cytoplasm. The enzyme catalyses L-citrulline + L-aspartate + ATP = 2-(N(omega)-L-arginino)succinate + AMP + diphosphate + H(+). It participates in amino-acid biosynthesis; L-arginine biosynthesis; L-arginine from L-ornithine and carbamoyl phosphate: step 2/3. The sequence is that of Argininosuccinate synthase from Shewanella sediminis (strain HAW-EB3).